Here is a 363-residue protein sequence, read N- to C-terminus: Aminopyrrolnitrin oxygenase PrnD (363 aa).

Positions 29–137 constitute a Rieske domain; sequence WYVAMRSNEL…TAERYGYVWV (109 aa). [2Fe-2S] cluster-binding residues include Cys69, His71, Cys88, and His91.

In terms of assembly, homodimer. The cofactor is [2Fe-2S] cluster. Fe cation serves as cofactor. It depends on FMN as a cofactor.

It catalyses the reaction aminopyrrolnitrin + NADPH + 2 O2 + H(+) = pyrrolnitrin + NADP(+) + 2 H2O. Its pathway is antibiotic biosynthesis. Its function is as follows. Involved in the biosynthesis of the antifungal antibiotic pyrrolnitrin (PRN). Catalyzes the oxidation of the amino group of aminopyrrolnitrin (APRN) to a nitro group to form PRN. It has high substrate specificity toward physiological substrate aminopyrrolnitrin, p-aminobenzylamine (pABA), p-aminobenzyl alcohol, and p-aminophenyl alanine. The polypeptide is Aminopyrrolnitrin oxygenase PrnD (prnD) (Pseudomonas fluorescens).